The chain runs to 333 residues: Fructose-1,6-bisphosphatase class 1 (333 aa).

Positions 90, 113, 115, and 116 each coordinate Mg(2+). Substrate is bound by residues 116 to 119, N209, Y242, and K272; that span reads DGSS. Mg(2+) is bound at residue E278.

Belongs to the FBPase class 1 family. As to quaternary structure, homotetramer. Mg(2+) is required as a cofactor.

The protein localises to the cytoplasm. The catalysed reaction is beta-D-fructose 1,6-bisphosphate + H2O = beta-D-fructose 6-phosphate + phosphate. The protein operates within carbohydrate biosynthesis; gluconeogenesis. The polypeptide is Fructose-1,6-bisphosphatase class 1 (Pasteurella multocida (strain Pm70)).